The sequence spans 261 residues: Cytochrome c oxidase subunit 3 (261 aa).

Over 1–15 (MAHQAHAYHMVDPSP) the chain is Mitochondrial matrix. Residues 16–34 (WPLTGAIAALLLTSGTAVW) form a helical membrane-spanning segment. At 35–40 (FHFHSL) the chain is on the mitochondrial intermembrane side. Residues 41-66 (TLLTMGNILLLLTMYQWWRDIIREGT) traverse the membrane as a helical segment. Over 67 to 72 (FQGHHT) the chain is Mitochondrial matrix. A helical membrane pass occupies residues 73–105 (PPVQKGLRYGMILFITSEVFFFLGFFWAFYHSS). The Mitochondrial intermembrane segment spans residues 106-128 (LSPTPELGGCWPPTGIITLDPFE). A helical transmembrane segment spans residues 129–152 (VPLLNTAVLLASGVTVTWAHHSIM). Topologically, residues 153–155 (EGE) are mitochondrial matrix. A helical transmembrane segment spans residues 156–183 (RKQTIQALTLTILLGFYFTFLQGMEYYE). Over 184 to 190 (APFTIAD) the chain is Mitochondrial intermembrane. A helical membrane pass occupies residues 191-223 (GVYGSTFFVATGFHGLHVIIGSTFLAICLLRQI). The Mitochondrial matrix segment spans residues 224 to 232 (QYHFTSEHH). The helical transmembrane segment at 233–256 (FGFEAAAWYWHFVDVVWLFLYVSI) threads the bilayer. Residues 257–261 (YWWGS) lie on the Mitochondrial intermembrane side of the membrane.

This sequence belongs to the cytochrome c oxidase subunit 3 family. As to quaternary structure, component of the cytochrome c oxidase (complex IV, CIV), a multisubunit enzyme composed of 14 subunits. The complex is composed of a catalytic core of 3 subunits MT-CO1, MT-CO2 and MT-CO3, encoded in the mitochondrial DNA, and 11 supernumerary subunits COX4I, COX5A, COX5B, COX6A, COX6B, COX6C, COX7A, COX7B, COX7C, COX8 and NDUFA4, which are encoded in the nuclear genome. The complex exists as a monomer or a dimer and forms supercomplexes (SCs) in the inner mitochondrial membrane with NADH-ubiquinone oxidoreductase (complex I, CI) and ubiquinol-cytochrome c oxidoreductase (cytochrome b-c1 complex, complex III, CIII), resulting in different assemblies (supercomplex SCI(1)III(2)IV(1) and megacomplex MCI(2)III(2)IV(2)).

The protein localises to the mitochondrion inner membrane. It carries out the reaction 4 Fe(II)-[cytochrome c] + O2 + 8 H(+)(in) = 4 Fe(III)-[cytochrome c] + 2 H2O + 4 H(+)(out). Component of the cytochrome c oxidase, the last enzyme in the mitochondrial electron transport chain which drives oxidative phosphorylation. The respiratory chain contains 3 multisubunit complexes succinate dehydrogenase (complex II, CII), ubiquinol-cytochrome c oxidoreductase (cytochrome b-c1 complex, complex III, CIII) and cytochrome c oxidase (complex IV, CIV), that cooperate to transfer electrons derived from NADH and succinate to molecular oxygen, creating an electrochemical gradient over the inner membrane that drives transmembrane transport and the ATP synthase. Cytochrome c oxidase is the component of the respiratory chain that catalyzes the reduction of oxygen to water. Electrons originating from reduced cytochrome c in the intermembrane space (IMS) are transferred via the dinuclear copper A center (CU(A)) of subunit 2 and heme A of subunit 1 to the active site in subunit 1, a binuclear center (BNC) formed by heme A3 and copper B (CU(B)). The BNC reduces molecular oxygen to 2 water molecules using 4 electrons from cytochrome c in the IMS and 4 protons from the mitochondrial matrix. This chain is Cytochrome c oxidase subunit 3 (mt-co3), found in Salmo salar (Atlantic salmon).